An 84-amino-acid polypeptide reads, in one-letter code: U2-theraphotoxin-Cg1b 1 (84 aa).

The signal sequence occupies residues 1–21; sequence MKVSVLITLAVWGVMFLLTSA. A propeptide spanning residues 22-48 is cleaved from the precursor; sequence QERGSDQMDSPAWLKSMERIFQSEERE. 3 disulfides stabilise this stretch: C49–C63, C56–C68, and C62–C76.

This sequence belongs to the neurotoxin 10 (Hwtx-1) family. 06 (F4b) subfamily. As to expression, expressed by the venom gland.

It localises to the secreted. In terms of biological role, probable ion channel inhibitor. This Chilobrachys guangxiensis (Chinese earth tiger tarantula) protein is U2-theraphotoxin-Cg1b 1.